A 419-amino-acid chain; its full sequence is Carbohydrate sulfotransferase 12 (419 aa).

Residues 1 to 5 lie on the Cytoplasmic side of the membrane; the sequence is MTKPR. Residues 6 to 26 form a helical; Signal-anchor for type II membrane protein membrane-spanning segment; it reads LFRLWLVLGSALMILLIIVYW. The Lumenal portion of the chain corresponds to 27 to 419; sequence DNVGTAHFYL…YPKPENLLRD (393 aa). The segment covering 78–87 has biased composition (basic and acidic residues); the sequence is HNDLSRRKTE. The segment at 78 to 99 is disordered; the sequence is HNDLSRRKTEQPPVPAPSKPVL. Asn-139 carries an N-linked (GlcNAc...) asparagine glycan. 176–182 is a 3'-phosphoadenylyl sulfate binding site; the sequence is PKVACTN. N-linked (GlcNAc...) asparagine glycosylation occurs at Asn-214. A 3'-phosphoadenylyl sulfate-binding site is contributed by 250–258; it reads RDPFVRLIS. N-linked (GlcNAc...) asparagine glycosylation is found at Asn-285 and Asn-375.

The protein belongs to the sulfotransferase 2 family.

Its subcellular location is the golgi apparatus membrane. It carries out the reaction chondroitin beta-D-glucuronate + n 3'-phosphoadenylyl sulfate = chondroitin 4'-sulfate + n adenosine 3',5'-bisphosphate + n H(+). Catalyzes the transfer of sulfate to position 4 of the N-acetylgalactosamine (GalNAc) residue of chondroitin and desulfated dermatan sulfate. Chondroitin sulfate constitutes the predominant proteoglycan present in cartilage and is distributed on the surfaces of many cells and extracellular matrices. Activity toward partially desulfated dermatan sulfate is however lower. Does not form 4, 6-di-O-sulfated GalNAc when chondroitin sulfate C is used as an acceptor. This Mus musculus (Mouse) protein is Carbohydrate sulfotransferase 12 (Chst12).